The sequence spans 648 residues: Golgin subfamily A member 8G (648 aa).

Residues 1-11 (MWPQARLPPHP) are compositionally biased toward pro residues. 2 disordered regions span residues 1–84 (MWPQ…SATL) and 119–139 (NKQV…KQKA). The segment covering 50–62 (TNGSIHETATSGG) has biased composition (polar residues). 3 coiled-coil regions span residues 105–160 (VSQL…LNTD), 223–275 (LEQS…MSQE), and 318–424 (EVEL…QQKQ). A compositionally biased stretch (basic and acidic residues) spans 121-139 (QVEHQLEEEKKANNEKQKA). 4 disordered regions span residues 356 to 376 (LREQ…QEER), 434 to 461 (ALPG…SIPQ), 508 to 549 (PITK…GVAA), and 600 to 624 (PVQG…QDHQ). Basic and acidic residues predominate over residues 441–453 (GGGHLDSEGEEAP). A compositionally biased stretch (gly residues) spans 521–534 (PGGGHHQAGPGQGG).

Belongs to the GOLGA8 family.

The polypeptide is Golgin subfamily A member 8G (Homo sapiens (Human)).